The primary structure comprises 206 residues: Testis-expressed protein 38 (206 aa).

Residues 15–35 (VSLYFGILGLCSVITGGCIIF) form a helical membrane-spanning segment.

The protein localises to the membrane. This Homo sapiens (Human) protein is Testis-expressed protein 38 (TEX38).